We begin with the raw amino-acid sequence, 345 residues long: Phosphate acyltransferase (345 aa).

It belongs to the PlsX family. Homodimer. Probably interacts with PlsY.

It is found in the cytoplasm. The catalysed reaction is a fatty acyl-[ACP] + phosphate = an acyl phosphate + holo-[ACP]. It participates in lipid metabolism; phospholipid metabolism. Functionally, catalyzes the reversible formation of acyl-phosphate (acyl-PO(4)) from acyl-[acyl-carrier-protein] (acyl-ACP). This enzyme utilizes acyl-ACP as fatty acyl donor, but not acyl-CoA. In Wolbachia pipientis wMel, this protein is Phosphate acyltransferase.